A 255-amino-acid chain; its full sequence is Ribosomal RNA small subunit methyltransferase A (255 aa).

S-adenosyl-L-methionine contacts are provided by H12, L14, G39, E60, D81, and N103.

The protein belongs to the class I-like SAM-binding methyltransferase superfamily. rRNA adenine N(6)-methyltransferase family. RsmA subfamily.

Its subcellular location is the cytoplasm. It catalyses the reaction adenosine(1518)/adenosine(1519) in 16S rRNA + 4 S-adenosyl-L-methionine = N(6)-dimethyladenosine(1518)/N(6)-dimethyladenosine(1519) in 16S rRNA + 4 S-adenosyl-L-homocysteine + 4 H(+). In terms of biological role, specifically dimethylates two adjacent adenosines (A1518 and A1519) in the loop of a conserved hairpin near the 3'-end of 16S rRNA in the 30S particle. May play a critical role in biogenesis of 30S subunits. The polypeptide is Ribosomal RNA small subunit methyltransferase A (Variovorax paradoxus (strain S110)).